The primary structure comprises 375 residues: Saccharopine dehydrogenase [NAD(+), L-lysine-forming] (375 aa).

L-saccharopine is bound by residues arginine 18 and lysine 78. Lysine 78 functions as the Proton acceptor in the catalytic mechanism. The Proton donor role is filled by histidine 96. Glutamine 101 contacts L-saccharopine. Arginine 130 provides a ligand contact to NAD(+). 2 residues coordinate L-saccharopine: arginine 131 and phenylalanine 135. Residues 203-204 (GR), aspartate 227, threonine 231, tyrosine 252, and valine 279 contribute to the NAD(+) site. Cysteine 205 and cysteine 250 are oxidised to a cystine. 280-282 (SAD) contacts L-saccharopine. 322-325 (IDHL) contributes to the NAD(+) binding site.

It belongs to the AlaDH/PNT family. As to quaternary structure, monomer.

The enzyme catalyses L-saccharopine + NAD(+) + H2O = L-lysine + 2-oxoglutarate + NADH + H(+). The protein operates within amino-acid biosynthesis; L-lysine biosynthesis via AAA pathway; L-lysine from L-alpha-aminoadipate (fungal route): step 3/3. In terms of biological role, catalyzes the NAD(+)-dependent cleavage of saccharopine to L-lysine and 2-oxoglutarate, the final step in the alpha-aminoadipate (AAA) pathway for lysin biosynthesis. The protein is Saccharopine dehydrogenase [NAD(+), L-lysine-forming] of Emericella nidulans (strain FGSC A4 / ATCC 38163 / CBS 112.46 / NRRL 194 / M139) (Aspergillus nidulans).